The following is a 296-amino-acid chain: Fructose-bisphosphate aldolase class 1 (296 aa).

E175 functions as the Proton acceptor in the catalytic mechanism. K212 serves as the catalytic Schiff-base intermediate with dihydroxyacetone-P.

It belongs to the class I fructose-bisphosphate aldolase family.

It catalyses the reaction beta-D-fructose 1,6-bisphosphate = D-glyceraldehyde 3-phosphate + dihydroxyacetone phosphate. Its pathway is carbohydrate degradation; glycolysis; D-glyceraldehyde 3-phosphate and glycerone phosphate from D-glucose: step 4/4. The protein is Fructose-bisphosphate aldolase class 1 of Staphylococcus aureus (strain Mu3 / ATCC 700698).